Consider the following 476-residue polypeptide: Aspartyl/glutamyl-tRNA(Asn/Gln) amidotransferase subunit B (476 aa).

This sequence belongs to the GatB/GatE family. GatB subfamily. Heterotrimer of A, B and C subunits.

The catalysed reaction is L-glutamyl-tRNA(Gln) + L-glutamine + ATP + H2O = L-glutaminyl-tRNA(Gln) + L-glutamate + ADP + phosphate + H(+). It carries out the reaction L-aspartyl-tRNA(Asn) + L-glutamine + ATP + H2O = L-asparaginyl-tRNA(Asn) + L-glutamate + ADP + phosphate + 2 H(+). Allows the formation of correctly charged Asn-tRNA(Asn) or Gln-tRNA(Gln) through the transamidation of misacylated Asp-tRNA(Asn) or Glu-tRNA(Gln) in organisms which lack either or both of asparaginyl-tRNA or glutaminyl-tRNA synthetases. The reaction takes place in the presence of glutamine and ATP through an activated phospho-Asp-tRNA(Asn) or phospho-Glu-tRNA(Gln). The protein is Aspartyl/glutamyl-tRNA(Asn/Gln) amidotransferase subunit B of Bacillus cytotoxicus (strain DSM 22905 / CIP 110041 / 391-98 / NVH 391-98).